The following is a 372-amino-acid chain: 4-hydroxy-3-methylbut-2-en-1-yl diphosphate synthase (flavodoxin) (372 aa).

The [4Fe-4S] cluster site is built by C270, C273, C305, and E312.

This sequence belongs to the IspG family. Requires [4Fe-4S] cluster as cofactor.

The enzyme catalyses (2E)-4-hydroxy-3-methylbut-2-enyl diphosphate + oxidized [flavodoxin] + H2O + 2 H(+) = 2-C-methyl-D-erythritol 2,4-cyclic diphosphate + reduced [flavodoxin]. It functions in the pathway isoprenoid biosynthesis; isopentenyl diphosphate biosynthesis via DXP pathway; isopentenyl diphosphate from 1-deoxy-D-xylulose 5-phosphate: step 5/6. Its function is as follows. Converts 2C-methyl-D-erythritol 2,4-cyclodiphosphate (ME-2,4cPP) into 1-hydroxy-2-methyl-2-(E)-butenyl 4-diphosphate. This chain is 4-hydroxy-3-methylbut-2-en-1-yl diphosphate synthase (flavodoxin), found in Cronobacter sakazakii (strain ATCC BAA-894) (Enterobacter sakazakii).